A 1275-amino-acid chain; its full sequence is Serine/threonine-protein kinase ULK4 (1275 aa).

In terms of domain architecture, Protein kinase spans 4–280 (FILYEEIGRG…WTRLLQHSFW (277 aa)). The Proton acceptor role is filled by aspartate 121. Disordered stretches follow at residues 299 to 346 (SRNT…EFRP) and 359 to 393 (FLLS…SPLT). The segment covering 336 to 346 (FRLENPTEFRP) has biased composition (basic and acidic residues). Polar residues-rich tracts occupy residues 363–373 (SRPTPRTSTAV) and 384–393 (CSPQKTSPLT). 6 HEAT repeats span residues 727 to 765 (LIQE…YNRE), 842 to 880 (LKMC…ILSH), 926 to 964 (STVV…LLVN), 1025 to 1063 (LVEE…NLVA), 1151 to 1189 (NRPL…LYGG), and 1213 to 1253 (PKEQ…LAPG).

This sequence belongs to the protein kinase superfamily. Ser/Thr protein kinase family. APG1/unc-51/ULK1 subfamily.

The enzyme catalyses L-seryl-[protein] + ATP = O-phospho-L-seryl-[protein] + ADP + H(+). It catalyses the reaction L-threonyl-[protein] + ATP = O-phospho-L-threonyl-[protein] + ADP + H(+). Functionally, may be involved in the remodeling of cytoskeletal components, such as alpha-tubulin, and in this way regulates neurite branching and elongation, as well as cell motility. The sequence is that of Serine/threonine-protein kinase ULK4 (ULK4) from Pongo abelii (Sumatran orangutan).